A 303-amino-acid chain; its full sequence is Sulfate adenylyltransferase subunit 2 (303 aa).

The protein belongs to the PAPS reductase family. CysD subfamily. As to quaternary structure, heterodimer composed of CysD, the smaller subunit, and CysN.

The catalysed reaction is sulfate + ATP + H(+) = adenosine 5'-phosphosulfate + diphosphate. The protein operates within sulfur metabolism; hydrogen sulfide biosynthesis; sulfite from sulfate: step 1/3. In terms of biological role, with CysN forms the ATP sulfurylase (ATPS) that catalyzes the adenylation of sulfate producing adenosine 5'-phosphosulfate (APS) and diphosphate, the first enzymatic step in sulfur assimilation pathway. APS synthesis involves the formation of a high-energy phosphoric-sulfuric acid anhydride bond driven by GTP hydrolysis by CysN coupled to ATP hydrolysis by CysD. The protein is Sulfate adenylyltransferase subunit 2 of Sulfurovum sp. (strain NBC37-1).